The primary structure comprises 273 residues: Tryptophan synthase alpha chain (273 aa).

Active-site proton acceptor residues include E49 and D60.

This sequence belongs to the TrpA family. In terms of assembly, tetramer of two alpha and two beta chains.

The enzyme catalyses (1S,2R)-1-C-(indol-3-yl)glycerol 3-phosphate + L-serine = D-glyceraldehyde 3-phosphate + L-tryptophan + H2O. It participates in amino-acid biosynthesis; L-tryptophan biosynthesis; L-tryptophan from chorismate: step 5/5. The alpha subunit is responsible for the aldol cleavage of indoleglycerol phosphate to indole and glyceraldehyde 3-phosphate. The chain is Tryptophan synthase alpha chain from Albidiferax ferrireducens (strain ATCC BAA-621 / DSM 15236 / T118) (Rhodoferax ferrireducens).